Reading from the N-terminus, the 63-residue chain is 2-hydroxymuconate tautomerase (63 aa).

The active-site Proton acceptor; via imino nitrogen is proline 2.

It belongs to the 4-oxalocrotonate tautomerase family. As to quaternary structure, homohexamer.

It catalyses the reaction (2Z,4E)-2-hydroxyhexa-2,4-dienedioate = (3E)-2-oxohex-3-enedioate. It functions in the pathway aromatic compound metabolism; salicylate degradation. Functionally, catalyzes the ketonization of 2-hydroxymuconate stereoselectively to yield 2-oxo-3-hexenedioate. This Pseudomonas fluorescens protein is 2-hydroxymuconate tautomerase (nahJ).